The following is a 126-amino-acid chain: Holo-[acyl-carrier-protein] synthase (126 aa).

Asp-9 and Glu-58 together coordinate Mg(2+).

Belongs to the P-Pant transferase superfamily. AcpS family. It depends on Mg(2+) as a cofactor.

It is found in the cytoplasm. It carries out the reaction apo-[ACP] + CoA = holo-[ACP] + adenosine 3',5'-bisphosphate + H(+). In terms of biological role, transfers the 4'-phosphopantetheine moiety from coenzyme A to a Ser of acyl-carrier-protein. This is Holo-[acyl-carrier-protein] synthase from Buchnera aphidicola subsp. Schizaphis graminum (strain Sg).